A 473-amino-acid chain; its full sequence is tRNA modification GTPase MnmE (473 aa).

The (6S)-5-formyl-5,6,7,8-tetrahydrofolate site is built by R31, E95, and R134. The TrmE-type G domain occupies 230–394 (GVSTVIAGKP…LKQHMGDLVK (165 aa)). Residues 240 to 245 (NAGKST), 259 to 265 (SHMPGTT), and 284 to 287 (DTAG) contribute to the GTP site. Residues S244 and T265 each contribute to the Mg(2+) site. K473 contacts (6S)-5-formyl-5,6,7,8-tetrahydrofolate.

Belongs to the TRAFAC class TrmE-Era-EngA-EngB-Septin-like GTPase superfamily. TrmE GTPase family. Homodimer. Heterotetramer of two MnmE and two MnmG subunits. It depends on K(+) as a cofactor.

It is found in the cytoplasm. Its function is as follows. Exhibits a very high intrinsic GTPase hydrolysis rate. Involved in the addition of a carboxymethylaminomethyl (cmnm) group at the wobble position (U34) of certain tRNAs, forming tRNA-cmnm(5)s(2)U34. This is tRNA modification GTPase MnmE from Chlorobaculum tepidum (strain ATCC 49652 / DSM 12025 / NBRC 103806 / TLS) (Chlorobium tepidum).